A 219-amino-acid chain; its full sequence is Ribose-5-phosphate isomerase A (219 aa).

Substrate is bound by residues 28-31 (TGST), 81-84 (DGAD), and 94-97 (KGGG). Catalysis depends on E103, which acts as the Proton acceptor. Residue K121 coordinates substrate.

This sequence belongs to the ribose 5-phosphate isomerase family. As to quaternary structure, homodimer.

It carries out the reaction aldehydo-D-ribose 5-phosphate = D-ribulose 5-phosphate. It functions in the pathway carbohydrate degradation; pentose phosphate pathway; D-ribose 5-phosphate from D-ribulose 5-phosphate (non-oxidative stage): step 1/1. In terms of biological role, catalyzes the reversible conversion of ribose-5-phosphate to ribulose 5-phosphate. In Shewanella oneidensis (strain ATCC 700550 / JCM 31522 / CIP 106686 / LMG 19005 / NCIMB 14063 / MR-1), this protein is Ribose-5-phosphate isomerase A.